Here is a 122-residue protein sequence, read N- to C-terminus: Large ribosomal subunit protein uL14 (122 aa).

It belongs to the universal ribosomal protein uL14 family. Part of the 50S ribosomal subunit. Forms a cluster with proteins L3 and L19. In the 70S ribosome, L14 and L19 interact and together make contacts with the 16S rRNA in bridges B5 and B8.

Functionally, binds to 23S rRNA. Forms part of two intersubunit bridges in the 70S ribosome. The chain is Large ribosomal subunit protein uL14 from Marinobacter nauticus (strain ATCC 700491 / DSM 11845 / VT8) (Marinobacter aquaeolei).